We begin with the raw amino-acid sequence, 642 residues long: Threonine--tRNA ligase (642 aa).

One can recognise a TGS domain in the interval 1 to 61 (MPIITLPDGS…SEDANLEIIT (61 aa)). Residues 243 to 534 (DHRKIGKALN…ITEEYAGFFP (292 aa)) are catalytic. 3 residues coordinate Zn(2+): cysteine 334, histidine 385, and histidine 511.

This sequence belongs to the class-II aminoacyl-tRNA synthetase family. As to quaternary structure, homodimer. Requires Zn(2+) as cofactor.

It localises to the cytoplasm. The enzyme catalyses tRNA(Thr) + L-threonine + ATP = L-threonyl-tRNA(Thr) + AMP + diphosphate + H(+). Catalyzes the attachment of threonine to tRNA(Thr) in a two-step reaction: L-threonine is first activated by ATP to form Thr-AMP and then transferred to the acceptor end of tRNA(Thr). Also edits incorrectly charged L-seryl-tRNA(Thr). The chain is Threonine--tRNA ligase from Histophilus somni (strain 2336) (Haemophilus somnus).